The following is a 381-amino-acid chain: Acetylornithine deacetylase (381 aa).

His-79 lines the Zn(2+) pocket. Residue Asp-81 is part of the active site. Zn(2+) is bound at residue Asp-111. Residue Glu-143 is part of the active site. Zn(2+) contacts are provided by Glu-144, Glu-168, and His-354.

The protein belongs to the peptidase M20A family. ArgE subfamily. As to quaternary structure, homodimer. Zn(2+) is required as a cofactor. It depends on Co(2+) as a cofactor. Glutathione serves as cofactor.

The protein localises to the cytoplasm. The enzyme catalyses N(2)-acetyl-L-ornithine + H2O = L-ornithine + acetate. It functions in the pathway amino-acid biosynthesis; L-arginine biosynthesis; L-ornithine from N(2)-acetyl-L-ornithine (linear): step 1/1. Functionally, catalyzes the hydrolysis of the amide bond of N(2)-acetylated L-amino acids. Cleaves the acetyl group from N-acetyl-L-ornithine to form L-ornithine, an intermediate in L-arginine biosynthesis pathway, and a branchpoint in the synthesis of polyamines. This Buchnera aphidicola subsp. Acyrthosiphon pisum (strain APS) (Acyrthosiphon pisum symbiotic bacterium) protein is Acetylornithine deacetylase.